The sequence spans 383 residues: Histidine decarboxylase (383 aa).

His-120 provides a ligand contact to substrate. Lys-233 is modified (N6-(pyridoxal phosphate)lysine).

Belongs to the group II decarboxylase family. In terms of assembly, homotetramer. It depends on pyridoxal 5'-phosphate as a cofactor.

The enzyme catalyses L-histidine + H(+) = histamine + CO2. In Acinetobacter baumannii (strain AB307-0294), this protein is Histidine decarboxylase.